Reading from the N-terminus, the 246-residue chain is Thaumatin-like protein 1 (246 aa).

The first 24 residues, 1-24 (MMKSQAALLGLTTLAILFFSGAHA), serve as a signal peptide directing secretion. Intrachain disulfides connect Cys33-Cys245, Cys81-Cys91, Cys96-Cys103, Cys151-Cys234, Cys156-Cys217, Cys164-Cys180, Cys184-Cys193, and Cys194-Cys204.

This sequence belongs to the thaumatin family. In terms of tissue distribution, equally expressed in the abscission zone and surrounding tissues of both fruitlets and leaves.

It is found in the secreted. May be involved in protecting plant tissues from pathogen infection. The sequence is that of Thaumatin-like protein 1 from Prunus persica (Peach).